The chain runs to 476 residues: Splicing factor ESS-2 homolog (476 aa).

M1 bears the N-acetylmethionine mark. Low complexity predominate over residues 1–18; the sequence is METPGASASSLLLPAASR. Disordered stretches follow at residues 1–36 and 91–148; these read METP…SKQR and LGKM…LPSL. Phosphothreonine is present on T3. Acidic residues predominate over residues 133 to 142; it reads DGEAGEEEEK. A Glycyl lysine isopeptide (Lys-Gly) (interchain with G-Cter in SUMO2) cross-link involves residue K142. A Phosphoserine modification is found at S292. T386 carries the phosphothreonine modification. S391 and S395 each carry phosphoserine. Residues 413–465 are disordered; the sequence is ALRASYTPSPARSTHLKTPASGLQTPTSTPAPGSATRTPLTQDPASITDNLLQ. Residues 437-451 show a composition bias toward low complexity; sequence TPTSTPAPGSATRTP. Residues 452 to 463 show a composition bias toward polar residues; sequence LTQDPASITDNL.

Belongs to the ESS2 family. In terms of assembly, identified in the spliceosome C complex. Interacts with FRA10AC1. Highly expressed in heart, brain and skeletal muscle. Detected at low levels in placenta.

Its subcellular location is the nucleus. May be involved in pre-mRNA splicing. The polypeptide is Splicing factor ESS-2 homolog (Homo sapiens (Human)).